A 286-amino-acid chain; its full sequence is uncharacterized protein (286 aa).

NAD(+) is bound by residues Ala-4–Asn-18 and Thr-95. Residue Lys-171 is part of the active site. Lys-239 contacts NAD(+).

The protein belongs to the HIBADH-related family.

This is an uncharacterized protein from Bacillus subtilis (strain 168).